Reading from the N-terminus, the 275-residue chain is Voltage-dependent calcium channel gamma-5 subunit (275 aa).

A run of 4 helical transmembrane segments spans residues 8-28, 103-123, 129-149, and 176-196; these read ALTL…GIAV, FPLV…IGHI, ILAF…VVGL, and GWSF…GVMS.

This sequence belongs to the PMP-22/EMP/MP20 family. CACNG subfamily. In terms of assembly, the L-type calcium channel is composed of five subunits: alpha-1, alpha-2/delta, beta and gamma. Acts as an auxiliary subunit for AMPA-selective glutamate receptors (AMPARs). Found in a complex with GRIA1, GRIA2, GRIA3, GRIA4, CNIH2, CNIH3, CACNG2, CACNG3, CACNG4, CACNG7 and CACNG8. Interacts with GRIA1, GRIA2, GRIA3 and GRIA4.

Its subcellular location is the membrane. It localises to the postsynaptic density membrane. In terms of biological role, regulates the gating properties of AMPA-selective glutamate receptors (AMPARs). Modulates their gating properties by accelerating their rates of activation, deactivation and desensitization. Displays subunit-specific AMPA receptor regulation. Shows specificity for GRIA1, GRIA4 and the long isoform of GRIA2. Thought to stabilize the calcium channel in an inactivated (closed) state. The polypeptide is Voltage-dependent calcium channel gamma-5 subunit (CACNG5) (Homo sapiens (Human)).